Reading from the N-terminus, the 522-residue chain is Light-independent protochlorophyllide reductase subunit B (522 aa).

Aspartate 36 is a [4Fe-4S] cluster binding site. Catalysis depends on aspartate 274, which acts as the Proton donor. 409–410 contacts substrate; that stretch reads GL. The segment at 426 to 464 is disordered; that stretch reads DEAGPSHHGGKAVPASAPRAEATADEGSTPEEAVPPVAA. The span at 455 to 464 shows a compositional bias: low complexity; sequence PEEAVPPVAA.

Belongs to the ChlB/BchB/BchZ family. Protochlorophyllide reductase is composed of three subunits; BchL, BchN and BchB. Forms a heterotetramer of two BchB and two BchN subunits. Requires [4Fe-4S] cluster as cofactor.

It catalyses the reaction chlorophyllide a + oxidized 2[4Fe-4S]-[ferredoxin] + 2 ADP + 2 phosphate = protochlorophyllide a + reduced 2[4Fe-4S]-[ferredoxin] + 2 ATP + 2 H2O. It participates in porphyrin-containing compound metabolism; bacteriochlorophyll biosynthesis (light-independent). Functionally, component of the dark-operative protochlorophyllide reductase (DPOR) that uses Mg-ATP and reduced ferredoxin to reduce ring D of protochlorophyllide (Pchlide) to form chlorophyllide a (Chlide). This reaction is light-independent. The NB-protein (BchN-BchB) is the catalytic component of the complex. The sequence is that of Light-independent protochlorophyllide reductase subunit B from Cereibacter sphaeroides (strain ATCC 17025 / ATH 2.4.3) (Rhodobacter sphaeroides).